We begin with the raw amino-acid sequence, 228 residues long: Elongation factor 1-beta 1 (228 aa).

A2 bears the N-acetylalanine mark. One can recognise a GST C-terminal domain in the interval 14 to 65 (LKTLEEHLAGKTYISGDQLSVDDVKVYAAVLENPGDGFPNASKWYDSVASHL). Residues 75–139 (GVRVGGGVAP…DTKKTKESGK (65 aa)) form a disordered region. The span at 95–115 (PAADGDGDDDDDIDLFADETE) shows a compositional bias: acidic residues. A compositionally biased stretch (basic and acidic residues) spans 116-138 (DEKKAAEEREAAKKDTKKTKESG).

Belongs to the EF-1-beta/EF-1-delta family. As to quaternary structure, EF-1 is composed of 4 subunits: alpha, beta (1B-alpha=beta'), delta (1B-beta), and gamma (1B-gamma).

The protein resides in the cell membrane. Functionally, EF-1-beta and EF-1-delta stimulate the exchange of GDP bound to EF-1-alpha to GTP. In Arabidopsis thaliana (Mouse-ear cress), this protein is Elongation factor 1-beta 1.